Consider the following 89-residue polypeptide: Small ribosomal subunit protein uS15 (89 aa).

It belongs to the universal ribosomal protein uS15 family. Part of the 30S ribosomal subunit. Forms a bridge to the 50S subunit in the 70S ribosome, contacting the 23S rRNA.

Its function is as follows. One of the primary rRNA binding proteins, it binds directly to 16S rRNA where it helps nucleate assembly of the platform of the 30S subunit by binding and bridging several RNA helices of the 16S rRNA. Functionally, forms an intersubunit bridge (bridge B4) with the 23S rRNA of the 50S subunit in the ribosome. The polypeptide is Small ribosomal subunit protein uS15 (Leuconostoc citreum (strain KM20)).